The chain runs to 4010 residues: Extracellular matrix organizing protein FRAS1 (4010 aa).

The N-terminal stretch at 1–25 (MGVLKAWLGVALALAEFAVLPNCEG) is a signal peptide. VWFC domains follow at residues 26–87 (ACLY…PQCA), 92–152 (GSCH…PICV), 156–216 (KPCS…SQCS), 218–278 (RSCS…EECA), and 282–342 (RSCS…PECI). Residues 26 to 3903 (ACLYQGSFLA…AASLSQTGAS (3878 aa)) lie on the Extracellular side of the membrane. Ser-343 carries the phosphoserine modification. The 59-residue stretch at 358–416 (SSSAREIKHVPDGEKWEEGPCKLCECREAQVTCYEPSCPPCPVATLALVVKGQCCPDCT) folds into the VWFC 6 domain. 14 FU repeats span residues 408–459 (KGQC…GFYQ), 461–504 (GSLC…GFYQ), 506–552 (HHSC…GFYN), 554–598 (QGTC…GYYA), 601–646 (TGSC…GFYP), 648–704 (HGIC…HFYL), 707–752 (TGLC…THFN), 754–799 (EGTC…EQFL), 802–851 (VGYC…GHYK), 853–899 (RGTC…GHYL), 902–947 (NQVC…QYYL), 951–996 (TKTC…QHYR), 998–1041 (SGSC…GYFA), and 1045–1088 (KHRC…GFSG). Asn-727 is a glycosylation site (N-linked (GlcNAc...) asparagine). Asn-1094 and Asn-1107 each carry an N-linked (GlcNAc...) asparagine glycan. CSPG repeat units lie at residues 1101-1196 (TPSL…LKIS), 1216-1307 (APYV…FQAN), 1328-1440 (ALRL…FQVS), 1465-1561 (APKL…FSFA), 1597-1691 (PAFQ…ISVT), 1712-1812 (GPRL…FSVS), and 1834-1938 (PPHI…FYVS). Residue Asn-1506 is glycosylated (N-linked (GlcNAc...) asparagine). N-linked (GlcNAc...) asparagine glycosylation is present at Asn-1779. 2 N-linked (GlcNAc...) asparagine glycosylation sites follow: Asn-1950 and Asn-1980. CSPG repeat units follow at residues 1959-2059 (EPPR…FSLT), 2080-2179 (IPHL…FDVV), 2201-2293 (PPVV…FVLS), 2313-2406 (ARPL…FTVS), and 2441-2538 (TPRI…FLVK). Calx-beta domains lie at 2545-2648 (VSDN…VGLS), 2661-2772 (AKVV…IALA), 2786-2892 (AKVL…VFLS), 2907-3009 (IAIN…VYLG), and 3027-3131 (ATVT…LVLG). N-linked (GlcNAc...) asparagine glycans are attached at residues Asn-2565, Asn-2666, and Asn-2684. 6 N-linked (GlcNAc...) asparagine glycosylation sites follow: Asn-2910, Asn-2987, Asn-3072, Asn-3220, Asn-3678, and Asn-3877. The helical transmembrane segment at 3904-3924 (IGSALAAIMLLLLLFLVACFV) threads the bilayer. Over 3925-4010 (TRKCQKQKKK…HNNLQDGTEV (86 aa)) the chain is Cytoplasmic.

It belongs to the FRAS1 family.

The protein resides in the cell membrane. Involved in extracellular matrix organization. Required for the regulation of epidermal-basement membrane adhesion responsible for proper organogenesis during embryonic development. Involved in brain organization and function. The sequence is that of Extracellular matrix organizing protein FRAS1 from Mus musculus (Mouse).